The primary structure comprises 325 residues: uncharacterized protein (325 aa).

Belongs to the mgp1/MG371 family.

This is an uncharacterized protein from Mycoplasma pneumoniae (strain ATCC 29342 / M129 / Subtype 1) (Mycoplasmoides pneumoniae).